The chain runs to 355 residues: tRNA uridine(34) hydroxylase (355 aa).

The 95-residue stretch at 146 to 240 folds into the Rhodanese domain; it reads DDPDTLFVDM…YARKAKEQGL (95 aa). C200 functions as the Cysteine persulfide intermediate in the catalytic mechanism. A disordered region spans residues 333-355; that stretch reads NKSKGLLQATMHIPSPEKSADEK.

The protein belongs to the TrhO family.

The enzyme catalyses uridine(34) in tRNA + AH2 + O2 = 5-hydroxyuridine(34) in tRNA + A + H2O. Catalyzes oxygen-dependent 5-hydroxyuridine (ho5U) modification at position 34 in tRNAs. This Yersinia pseudotuberculosis serotype O:1b (strain IP 31758) protein is tRNA uridine(34) hydroxylase.